A 258-amino-acid polypeptide reads, in one-letter code: Elongation factor Ts (258 aa).

The tract at residues Thr81–Val84 is involved in Mg(2+) ion dislocation from EF-Tu. A disordered region spans residues Gly216–Lys258. The segment covering Pro229–Ala241 has biased composition (pro residues). Over residues Ala249–Lys258 the composition is skewed to basic residues.

The protein belongs to the EF-Ts family.

The protein localises to the cytoplasm. In terms of biological role, associates with the EF-Tu.GDP complex and induces the exchange of GDP to GTP. It remains bound to the aminoacyl-tRNA.EF-Tu.GTP complex up to the GTP hydrolysis stage on the ribosome. The chain is Elongation factor Ts from Synechococcus sp. (strain JA-2-3B'a(2-13)) (Cyanobacteria bacterium Yellowstone B-Prime).